Here is a 521-residue protein sequence, read N- to C-terminus: T-box transcription factor TBX5 (521 aa).

The tract at residues 1 to 45 (MADTEEGFGLPSTPVDSEAKELQAEAKQDPQLGTTSKAPTSPQAA) is disordered. Positions 17–28 (SEAKELQAEAKQ) are enriched in basic and acidic residues. The span at 31 to 45 (QLGTTSKAPTSPQAA) shows a compositional bias: polar residues. A DNA-binding region (T-box) is located at residues 63-238 (LWLKFHEVGT…NNPFAKGFRG (176 aa)). Disordered stretches follow at residues 254-281 (EYPVVPRSTVRQKVSSNHSPFSGETRVL) and 332-352 (STTEHPYKKPYMETSPAEEDP). Residues 262–281 (TVRQKVSSNHSPFSGETRVL) show a composition bias toward polar residues.

In terms of assembly, monomer. Homodimer (via the T-box); binds DNA as homodimer.

The protein resides in the nucleus. Its subcellular location is the cytoplasm. Its function is as follows. DNA-binding protein that regulates the transcription of several genes and is involved in heart development and limb pattern formation. May bind to the core DNA motif of promoters. This is T-box transcription factor TBX5 (TBX5) from Gallus gallus (Chicken).